We begin with the raw amino-acid sequence, 447 residues long: MNKNTWIVGFTLFAMFFGAGNLIFPPNLGQDSGHFFWPAVIAFCLTGIGLPLLGVIVGALDKQGYVGSLNKISPKFSVIFLIIIYLTIGPLFAIPRTASTSFEMTVTPIAHTNSNLVLFIFTLIYFLVVLYLCINPGKIVDRIGSLLTPLLLITILAMIIKGFVDYSGNAPSHGNQVDYNSAIGSFSKGFTEGYLTMDAIAAIAFSMIVVNAIKATGVKHANQIFKQTVMSGLIAAIALVFIYVSLGFIGNHMNVDNATLKNLTAKYQNVGAYLLTTMAANSFGVFGKYLLGIIVALACLTTACGLIVSVSQYFNRIFPKVSYKAYTIFFTLISFILANLGLNAVISMSVPVLSVIYPIAITVVLLILLARFIPTKPIAQQIPIAVISIVSILSVISTNGWVKMSFIEALPLKQYSLEWFPIAVVATIIGYVVAKFVNQDHIVYQKE.

Helical transmembrane passes span 6–26 (WIVG…IFPP), 40–60 (VIAF…VGAL), 74–94 (PKFS…LFAI), 116–136 (LVLF…CINP), 143–163 (IGSL…IKGF), 193–213 (GYLT…VNAI), 229–249 (VMSG…LGFI), 270–287 (VGAY…GVFG), 290–310 (LLGI…IVSV), 328–348 (IFFT…VISM), 350–370 (VPVL…ILLA), 382–402 (IPIA…NGWV), and 417–437 (LEWF…AKFV).

This sequence belongs to the branched chain amino acid transporter family.

The protein localises to the cell membrane. Its function is as follows. Component of the transport system for branched-chain amino acids (leucine, isoleucine and valine), which is coupled to a proton motive force. This Staphylococcus haemolyticus (strain JCSC1435) protein is Putative branched-chain amino acid carrier protein SH1502.